We begin with the raw amino-acid sequence, 355 residues long: Thiamine thiazole synthase, chloroplastic (355 aa).

The N-terminal 42 residues, 1–42, are a transit peptide targeting the chloroplast; the sequence is MAAMATTASSLLKTSFAGARLPAAARNPTVSVAPRTGGAICN. Residues Ala-96, 116–117, Gly-124, and Val-189 each bind substrate; that span reads EQ. Cys-218 is subject to 2,3-didehydroalanine (Cys). Substrate contacts are provided by residues Asp-220, His-235, Met-287, and 297 to 299; that span reads RMG.

Belongs to the THI4 family. Homooctamer. The cofactor is Fe cation. Post-translationally, during the catalytic reaction, a sulfide is transferred from Cys-218 to a reaction intermediate, generating a dehydroalanine residue.

The protein resides in the plastid. The protein localises to the chloroplast. The enzyme catalyses [ADP-thiazole synthase]-L-cysteine + glycine + NAD(+) = [ADP-thiazole synthase]-dehydroalanine + ADP-5-ethyl-4-methylthiazole-2-carboxylate + nicotinamide + 3 H2O + 2 H(+). Functionally, involved in biosynthesis of the thiamine precursor thiazole. Catalyzes the conversion of NAD and glycine to adenosine diphosphate 5-(2-hydroxyethyl)-4-methylthiazole-2-carboxylic acid (ADT), an adenylated thiazole intermediate. The reaction includes an iron-dependent sulfide transfer from a conserved cysteine residue of the protein to a thiazole intermediate. The enzyme can only undergo a single turnover, which suggests it is a suicide enzyme. May have additional roles in adaptation to various stress conditions and in DNA damage tolerance. Required fot thiamine accumulation and disease resistance toward the bacterial pathogen Xanthomonas oryzae pv oryzae (Xoo) and the fungal pathogen Magnaporthe oryzae. During infection by Xoo, functions positively in the defense pathway initiated by the resistance genes XA3 and XA26 by promoting thiamine synthesis. May function upstream of the defense-related proteins peroxidases, phenylalanine ammonia-lyases and pathogenesis-related proteins. (Microbial infection) During infection by Xanthomonas oryzae pv oryzae (Xoo), THI1 interacts with the type III effector virulence factor xadA from Xoo, which is an adhesin-like outer membrane protein. This probably attenuates the function of THI1 in defense response. This chain is Thiamine thiazole synthase, chloroplastic, found in Oryza sativa subsp. japonica (Rice).